The following is a 567-amino-acid chain: Low-affinity glucose transporter HXT3 (567 aa).

The segment covering 1 to 29 (MNSTPDLISPQKSSENSNADLPSNSSQVM) has biased composition (polar residues). The disordered stretch occupies residues 1 to 30 (MNSTPDLISPQKSSENSNADLPSNSSQVMN). The Cytoplasmic segment spans residues 1 to 57 (MNSTPDLISPQKSSENSNADLPSNSSQVMNMPEEKGVQDDFQAEADQVLTNPNTGKG). Residue Ser-23 is modified to Phosphoserine. Residues 58-78 (AYVTVSICCVMVAFGGFVFGW) form a helical membrane-spanning segment. The Extracellular segment spans residues 79–113 (DTGTISGFVAQTDFLRRFGMKHKDGSYYLSKVRTG). The helical transmembrane segment at 114–134 (LIVSIFNIGCAIGGIILAKLG) threads the bilayer. Residues 135 to 140 (DMYGRK) are Cytoplasmic-facing. A helical transmembrane segment spans residues 141–161 (MGLIVVVVIYIIGIIIQIASI). At 162–171 (NKWYQYFIGR) the chain is on the extracellular side. The chain crosses the membrane as a helical span at residues 172–192 (IISGLGVGGIAVLSPMLISEV). The Cytoplasmic segment spans residues 193 to 198 (APKEMR). A helical transmembrane segment spans residues 199–219 (GTLVSCYQLMITLGIFLGYCT). The Extracellular segment spans residues 220 to 233 (NFGTKNYSNSVQWR). A glycan (N-linked (GlcNAc...) asparagine) is linked at Asn-225. A helical transmembrane segment spans residues 234 to 254 (VPLGLCFAWALFMIGGMTFVP). The Cytoplasmic segment spans residues 255-337 (ESPRYLVEAG…IQSLQQLTGD (83 aa)). The helical transmembrane segment at 338-354 (NYFFYYGTTVFNAVGMS) threads the bilayer. The Extracellular portion of the chain corresponds to 355–360 (DSFETS). Residues 361–378 (IVFGVVNFFSTCCSLYTV) form a helical membrane-spanning segment. The Cytoplasmic portion of the chain corresponds to 379–385 (DRFGRRN). A helical membrane pass occupies residues 386-406 (CLLYGAIGMVCCYVVYASVGV). At 407–428 (TRLWPNGEGNGSSKGAGNCMIV) the chain is on the extracellular side. N-linked (GlcNAc...) asparagine glycosylation occurs at Asn-416. Residues 429 to 449 (FACFYIFCFATTWAPIAYVVI) form a helical membrane-spanning segment. At 450–466 (SETFPLRVKSKAMSIAT) the chain is on the cytoplasmic side. Residues 467-487 (AANWLWGFLIGFFTPFITGAI) traverse the membrane as a helical segment. Asn-488 is a topological domain (extracellular). A helical transmembrane segment spans residues 489–509 (FYYGYVFMGCMVFAYFYVFFF). The Cytoplasmic portion of the chain corresponds to 510–567 (VPETKGLTLEEVNDMYAEGVLPWKSASWVPTSQRGANYDADALMHDDQPFYKKMFGKK).

It belongs to the major facilitator superfamily. Sugar transporter (TC 2.A.1.1) family.

It localises to the membrane. Functionally, low-affinity glucose transporter. This Saccharomyces cerevisiae (strain ATCC 204508 / S288c) (Baker's yeast) protein is Low-affinity glucose transporter HXT3 (HXT3).